The sequence spans 265 residues: Imidazole glycerol phosphate synthase subunit HisF (265 aa).

Active-site residues include D12 and D131.

Belongs to the HisA/HisF family. In terms of assembly, heterodimer of HisH and HisF.

Its subcellular location is the cytoplasm. It carries out the reaction 5-[(5-phospho-1-deoxy-D-ribulos-1-ylimino)methylamino]-1-(5-phospho-beta-D-ribosyl)imidazole-4-carboxamide + L-glutamine = D-erythro-1-(imidazol-4-yl)glycerol 3-phosphate + 5-amino-1-(5-phospho-beta-D-ribosyl)imidazole-4-carboxamide + L-glutamate + H(+). Its pathway is amino-acid biosynthesis; L-histidine biosynthesis; L-histidine from 5-phospho-alpha-D-ribose 1-diphosphate: step 5/9. Its function is as follows. IGPS catalyzes the conversion of PRFAR and glutamine to IGP, AICAR and glutamate. The HisF subunit catalyzes the cyclization activity that produces IGP and AICAR from PRFAR using the ammonia provided by the HisH subunit. This chain is Imidazole glycerol phosphate synthase subunit HisF, found in Alkalilimnicola ehrlichii (strain ATCC BAA-1101 / DSM 17681 / MLHE-1).